A 370-amino-acid chain; its full sequence is 5-hydroxytryptamine receptor 5B (370 aa).

The segment at 1-36 is disordered; sequence MEVSNLSGATPGIAFPPGPESCSDSPSSGRSMGSTP. Over 1–48 the chain is Extracellular; it reads MEVSNLSGATPGIAFPPGPESCSDSPSSGRSMGSTPGGLILSGREPPF. Asparagine 5 carries an N-linked (GlcNAc...) asparagine glycan. The segment covering 20-36 has biased composition (low complexity); that stretch reads ESCSDSPSSGRSMGSTP. Residues 49 to 75 form a helical membrane-spanning segment; the sequence is SAFTVLVVTLLVLLIAATFLWNLLVLV. The Cytoplasmic portion of the chain corresponds to 76–88; the sequence is TILRVRAFHRVPH. A helical membrane pass occupies residues 89 to 115; it reads NLVASTAVSDVLVAALVMPLSLVSELS. At 116–127 the chain is on the extracellular side; it reads AGRRWQLGRSLC. Cysteines 127 and 205 form a disulfide. Residues 128–150 form a helical membrane-spanning segment; that stretch reads HVWISFDVLCCTASIWNVAAIAL. Aspartate 134 serves as a coordination point for serotonin. Residues 151 to 168 are Cytoplasmic-facing; it reads DRYWTITRHLQYTLRTRR. A helical transmembrane segment spans residues 169 to 189; that stretch reads RASALMIAITWALSALIALAP. Residues 190–211 are Extracellular-facing; the sequence is LLFGWGEAYDARLQRCQVSQEP. The chain crosses the membrane as a helical span at residues 212-233; it reads SYAVFSTCGAFYVPLAVVLFVY. Residues 234-300 are Cytoplasmic-facing; that stretch reads WKIYKAAKFR…QKEKRAAMMV (67 aa). A helical transmembrane segment spans residues 301 to 325; it reads GILIGVFVLCWIPFFLTELVSPLCA. Residues 326 to 327 lie on the Extracellular side of the membrane; that stretch reads CS. Residues 328–352 traverse the membrane as a helical segment; sequence LPPIWKSIFLWLGYSNSFFNPLIYT. At 353–370 the chain is on the cytoplasmic side; that stretch reads AFNKNYNNAFKSLFTKQR.

Belongs to the G-protein coupled receptor 1 family. Brain; in the CA1 region of hippocampus, the medial habenula, and raphe nuclei.

Its subcellular location is the cell membrane. Its function is as follows. G-protein coupled receptor for 5-hydroxytryptamine (serotonin), a biogenic hormone that functions as a neurotransmitter, a hormone and a mitogen. Also functions as a receptor for ergot alkaloid derivatives and other psychoactive substances. Ligand binding causes a conformation change that triggers signaling via guanine nucleotide-binding proteins (G proteins) and modulates the activity of downstream effectors. Htr5b is coupled to G(i)/G(o) G alpha proteins and mediates inhibitory neurotransmission: signaling inhibits adenylate cyclase activity and activates a phosphatidylinositol-calcium second messenger system that regulates the release of Ca(2+) ions from intracellular stores. This chain is 5-hydroxytryptamine receptor 5B, found in Rattus norvegicus (Rat).